A 214-amino-acid polypeptide reads, in one-letter code: Elongation factor Ts (214 aa).

The involved in Mg(2+) ion dislocation from EF-Tu stretch occupies residues 80–83 (TDFV).

This sequence belongs to the EF-Ts family.

Its subcellular location is the cytoplasm. Its function is as follows. Associates with the EF-Tu.GDP complex and induces the exchange of GDP to GTP. It remains bound to the aminoacyl-tRNA.EF-Tu.GTP complex up to the GTP hydrolysis stage on the ribosome. In Syntrophomonas wolfei subsp. wolfei (strain DSM 2245B / Goettingen), this protein is Elongation factor Ts.